Here is a 244-residue protein sequence, read N- to C-terminus: Pyridoxal phosphate homeostasis protein (244 aa).

N6-(pyridoxal phosphate)lysine is present on lysine 37.

This sequence belongs to the pyridoxal phosphate-binding protein YggS/PROSC family.

In terms of biological role, pyridoxal 5'-phosphate (PLP)-binding protein, which may be involved in intracellular homeostatic regulation of pyridoxal 5'-phosphate (PLP), the active form of vitamin B6. The polypeptide is Pyridoxal phosphate homeostasis protein (Caenorhabditis elegans).